The following is a 498-amino-acid chain: L-amino acid oxidase Bs29 (498 aa).

An N-terminal signal peptide occupies residues 1 to 3 (SCA). C12 and C175 are oxidised to a cystine. FAD-binding positions include 45–46 (MS), 65–66 (EA), R73, and 89–92 (GPMR). R92 contacts substrate. N174 is a glycosylation site (N-linked (GlcNAc...) asparagine). H225 provides a ligand contact to substrate. Residue V263 coordinates FAD. A disulfide bridge connects residues C333 and C414. Y374 contributes to the substrate binding site. FAD-binding positions include E459 and 466 to 471 (GWIDST). A substrate-binding site is contributed by 466-467 (GW).

It belongs to the flavin monoamine oxidase family. FIG1 subfamily. Monomer. This is in contrast with most of its orthologs, that are non-covalently linked homodimers. FAD serves as cofactor. In terms of tissue distribution, expressed by the venom gland.

It is found in the secreted. The catalysed reaction is an L-alpha-amino acid + O2 + H2O = a 2-oxocarboxylate + H2O2 + NH4(+). It catalyses the reaction L-leucine + O2 + H2O = 4-methyl-2-oxopentanoate + H2O2 + NH4(+). Functionally, catalyzes an oxidative deamination of predominantly hydrophobic and aromatic L-amino acids, thus producing hydrogen peroxide that may contribute to the diverse toxic effects of this enzyme. Shows activity on L-Leu. Damage cell membranes of the Gram-positive bacteria S.aureus (MIC=4 ug/ml and MBC=8 ug/ml) and the Gram-negative bacteria A.baumanni (MIC=2 ug/ml and MBC=4 ug/ml). This antibacterial activity is dependent on the production of hydrogen peroxyde, since it is inhibited by catalase, a hydrogen peroxyde scavenger. The polypeptide is L-amino acid oxidase Bs29 (Bothriechis schlegelii (Eyelash palm pitviper)).